The following is a 220-amino-acid chain: CRISPR system Cms endoribonuclease Csm3 (220 aa).

The protein belongs to the CRISPR-associated Csm3 family. As to quaternary structure, part of the Csm effector complex that includes at least Cas10(1), Csm2(3), Csm3(5), Csm4(1), Csm5(1) and mature crRNA. The Csm complex is elongated and slightly twisted with a maximal length of 215 Angstroms and a diameter of 75-80 Angstroms. It has been modeled to have a central protein filamant of Csm3 subunits along which the dsRNA helix of paired crRNA and target RNA binds. The filament is capped at one end by Cas10 and Csm4 and at the other end by Csm5; ssDNA is thought to bind to the N-terminal HD domain of Cas10. Csm with a precursor crRNA does not include Csm5, while Cas6, the enzyme probably involved in pre-crRNA processing, is found associated with a subset of the Csm complex. The cofactor is a metal cation.

Its activity is regulated as follows. Target ssRNase is inhibited by EDTA. Its function is as follows. CRISPR (clustered regularly interspaced short palindromic repeat) is an adaptive immune system that provides protection against mobile genetic elements (viruses, transposable elements and conjugative plasmids). CRISPR clusters contain spacers, sequences complementary to antecedent mobile elements, and target invading nucleic acids. CRISPR clusters are transcribed and processed into CRISPR RNA (crRNA). The type III-A Csm effector complex binds crRNA and acts as a crRNA-guided RNase, DNase and cyclic oligoadenylate synthase; binding of target RNA cognate to the crRNA is required for all activities. In a heterologous host this Csm effector complex restricts ssRNA phage MS2, suggesting it may target RNA viruses in vivo. Functionally, csm functions as a non-specific ssDNase. Base-pairing between crRNA and target RNA to form a ternary Csm complex activates a ssDNase activity; target RNA cleavage suppresses the ssDNase, a temporal control that prevents uncontrolled DNA degradation. Viral RNA transcripts probably tether the Csm complex to the viral genome, recruiting Cas10 ssDNA activity which is able to degrade DNA in the transcription bubble, spatially controlling the DNase activity. This subunit has the target ssRNA endonuclease activity; it cleaves multiple sites in the target RNA at 6 nucleotide intervals. The number of cleavage sites in the target RNA correlates with the number of Csm3 subunits in the Csm effector complex. In the Csm complex target RNA and ssDNA are cleaved simultaneously, although RNase activity (of Csm3) is much faster. RNA cleavage by Csm3 is not required for ssDNase activity as Csm complex with inactive Csm3 still has ssDNase activity; however as the cleaved target RNA products dissociate away ssDNase activity decreases. The protein is CRISPR system Cms endoribonuclease Csm3 of Streptococcus thermophilus.